Reading from the N-terminus, the 664-residue chain is 1,4-alpha-glucan branching enzyme GlgB 2 (664 aa).

The span at 1–17 shows a compositional bias: basic and acidic residues; that stretch reads MGGKEMRNCKELKHEKN. The segment at 1 to 31 is disordered; it reads MGGKEMRNCKELKHEKNGNVTEKVGKNKGKS. The Nucleophile role is filled by Asp342. Glu395 serves as the catalytic Proton donor.

It belongs to the glycosyl hydrolase 13 family. GlgB subfamily. Monomer.

It carries out the reaction Transfers a segment of a (1-&gt;4)-alpha-D-glucan chain to a primary hydroxy group in a similar glucan chain.. It functions in the pathway glycan biosynthesis; glycogen biosynthesis. Its function is as follows. Catalyzes the formation of the alpha-1,6-glucosidic linkages in glycogen by scission of a 1,4-alpha-linked oligosaccharide from growing alpha-1,4-glucan chains and the subsequent attachment of the oligosaccharide to the alpha-1,6 position. In Clostridium perfringens (strain 13 / Type A), this protein is 1,4-alpha-glucan branching enzyme GlgB 2 (glgB2).